We begin with the raw amino-acid sequence, 399 residues long: MDLQTALAEIKRGTEEILIEDELVEKLKSGKKLKIKAGFDPTAPDLHLGHTVLINKMKTFQDLGHEVVFLIGDFTGMIGDPTGKNVTRKPLTREDVLANAETYKEQVFKILDPAKTTVAFNSTWMENLGAAGMIKLAARQTVARMLERDDFKKRYASGQSIAIHEFLYPLVQGWDSVALEADVELGGTDQRFNLLMGRELQKDEGQKPQTVIMTPLLEGTDGVQKMSKSLGNYIGITDAPNDMFGKIMSISDVLMWRYYDLLSGLSIAGINAQKERVEQGTNPRDIKIELAKELIARFHSEADAQAAHDDFIQRFQKKALPDEIPELTVTIEQDSILIANLLKEANLVASTSEAMRMIKQGAVKLNGEDKITDTKLEIAKGSTAIYQVGKRKFANITVA.

The short motif at 41 to 50 is the 'HIGH' region element; sequence PTAPDLHLGH. The 'KMSKS' region signature appears at 225–229; that stretch reads KMSKS. Lys228 contributes to the ATP binding site. In terms of domain architecture, S4 RNA-binding spans 336-398; that stretch reads ILIANLLKEA…GKRKFANITV (63 aa).

Belongs to the class-I aminoacyl-tRNA synthetase family. TyrS type 2 subfamily. In terms of assembly, homodimer.

The protein resides in the cytoplasm. The enzyme catalyses tRNA(Tyr) + L-tyrosine + ATP = L-tyrosyl-tRNA(Tyr) + AMP + diphosphate + H(+). Functionally, catalyzes the attachment of tyrosine to tRNA(Tyr) in a two-step reaction: tyrosine is first activated by ATP to form Tyr-AMP and then transferred to the acceptor end of tRNA(Tyr). The sequence is that of Tyrosine--tRNA ligase 2 from Pseudoalteromonas translucida (strain TAC 125).